The primary structure comprises 135 residues: Large ribosomal subunit protein eL32 (135 aa).

Belongs to the eukaryotic ribosomal protein eL32 family.

In Methanococcus vannielii, this protein is Large ribosomal subunit protein eL32 (rpl32e).